A 227-amino-acid chain; its full sequence is MTSVCFLAGRTAALIPAAGSGTRLGRGPKAFVEVAGQSLLARSVAALAPWVDEVLVALPEGFPLPPGLPAQAILGGTTRQESVWRLLHATTADVVLVHDAARPFLPGAVVTALLEAVSETGAATAALPVADTLVRGERGRWADLVPREGLWAVQTPQAFRRALLLRAHAAARAEGFGATDDAGLIARLGLPVRLVPGDARLFKVTTPGDLALAQAVAAVWDATCDAP.

It belongs to the IspD/TarI cytidylyltransferase family. IspD subfamily.

The catalysed reaction is 2-C-methyl-D-erythritol 4-phosphate + CTP + H(+) = 4-CDP-2-C-methyl-D-erythritol + diphosphate. It functions in the pathway isoprenoid biosynthesis; isopentenyl diphosphate biosynthesis via DXP pathway; isopentenyl diphosphate from 1-deoxy-D-xylulose 5-phosphate: step 2/6. Functionally, catalyzes the formation of 4-diphosphocytidyl-2-C-methyl-D-erythritol from CTP and 2-C-methyl-D-erythritol 4-phosphate (MEP). This chain is 2-C-methyl-D-erythritol 4-phosphate cytidylyltransferase, found in Deinococcus geothermalis (strain DSM 11300 / CIP 105573 / AG-3a).